Consider the following 344-residue polypeptide: GTP 3',8-cyclase (344 aa).

The Radical SAM core domain occupies 19 to 244 (PFARPITYLR…TPLAERTGGP (226 aa)). R28 is a GTP binding site. Positions 35 and 39 each coordinate [4Fe-4S] cluster. Y41 contacts S-adenosyl-L-methionine. C42 lines the [4Fe-4S] cluster pocket. R77 provides a ligand contact to GTP. Position 81 (G81) interacts with S-adenosyl-L-methionine. GTP is bound at residue T110. S134 is a binding site for S-adenosyl-L-methionine. K170 contributes to the GTP binding site. M204 provides a ligand contact to S-adenosyl-L-methionine. Residues C268 and C271 each contribute to the [4Fe-4S] cluster site. 273-275 (RVR) contributes to the GTP binding site. C285 provides a ligand contact to [4Fe-4S] cluster.

This sequence belongs to the radical SAM superfamily. MoaA family. In terms of assembly, monomer and homodimer. Requires [4Fe-4S] cluster as cofactor.

It carries out the reaction GTP + AH2 + S-adenosyl-L-methionine = (8S)-3',8-cyclo-7,8-dihydroguanosine 5'-triphosphate + 5'-deoxyadenosine + L-methionine + A + H(+). It participates in cofactor biosynthesis; molybdopterin biosynthesis. Catalyzes the cyclization of GTP to (8S)-3',8-cyclo-7,8-dihydroguanosine 5'-triphosphate. In Paracoccus denitrificans (strain Pd 1222), this protein is GTP 3',8-cyclase.